The sequence spans 325 residues: Acetyl-coenzyme A carboxylase carboxyl transferase subunit alpha (325 aa).

In terms of domain architecture, CoA carboxyltransferase C-terminal spans 35–292; the sequence is EIEKLEARLA…DRVLRRSLKQ (258 aa).

The protein belongs to the AccA family. As to quaternary structure, acetyl-CoA carboxylase is a heterohexamer composed of biotin carboxyl carrier protein (AccB), biotin carboxylase (AccC) and two subunits each of ACCase subunit alpha (AccA) and ACCase subunit beta (AccD).

The protein resides in the cytoplasm. The catalysed reaction is N(6)-carboxybiotinyl-L-lysyl-[protein] + acetyl-CoA = N(6)-biotinyl-L-lysyl-[protein] + malonyl-CoA. Its pathway is lipid metabolism; malonyl-CoA biosynthesis; malonyl-CoA from acetyl-CoA: step 1/1. In terms of biological role, component of the acetyl coenzyme A carboxylase (ACC) complex. First, biotin carboxylase catalyzes the carboxylation of biotin on its carrier protein (BCCP) and then the CO(2) group is transferred by the carboxyltransferase to acetyl-CoA to form malonyl-CoA. In Geobacillus kaustophilus (strain HTA426), this protein is Acetyl-coenzyme A carboxylase carboxyl transferase subunit alpha.